A 341-amino-acid chain; its full sequence is Short chain dehydrogenase virL (341 aa).

The NADP(+) site is built by Leu49, Lys74, Asp97, Asn123, Tyr210, and Lys214. The active-site Proton donor is the Tyr210. The Lowers pKa of active site Tyr role is filled by Lys214.

Belongs to the short-chain dehydrogenases/reductases (SDR) family.

It participates in secondary metabolite biosynthesis. Functionally, short chain dehydrogenase; part of the gene cluster that mediates the biosynthesis of virensols and trichoxide, fungal natural products that contain or are derived from a salicylaldehyde core. The pathway begins with the synthesis of the reduced chain in virensol C by the highly reducing polyketide synthase virA via condensation of one acetate and 8 malonate units. VirA has interesting programming rules since the first 2 ketides are fully reduced, the 3 following ketides undergo beta-dehydration, and the last 3 ketides are only reduced to beta-hydroxys to yield the trihydroxy portion. The production of aldehyde virensol C by virA alone is surprising, since virA does not contain a reductase (R) domain that is typically associated with reductive product release in HRPKS. The cupin-domain enzyme virC is involved in enhancing virA product turnover. The short-chain dehydrogenase virB then oxidizes the C-7 alcohol of virensol C to a ketone, yielding virensol D. Virensol D is further transformed to salicylaldehyde 5-deoxyaurocitrin by the short-chain dehydrogenase virD. VirD catalyzes the dehydrogenation of C-3 to form the beta-ketone aldehyde, which is followed by the generation of the nucleophilic C-2 that is required for the intramolecular aldol condensation between C-2 and C-7, itself followed by dehydration and aromatization which leads to salicylaldehyde 5-deoxyaurocitrin. While the dehydrogenation of virensol D is definitely catalyzed by virD, the aldol condensation and dehydration may be uncatalyzed or assisted by virD. The short chain dehydrogenase virG then converts salicylaldehyde 5-deoxyaurocitrin into virensol B which is further hydroxylated by the cytochrome P450 monooxygenase virE to yield the hydroquinone virensol A. VirI then may oxidize virensol A to form the quinone, while virH performs the epoxidation. Finally, the two remaining short-chain dehydrogenases, virK and virL, are probably responsible for reducing the ketones to the corresponding alcohols to furnish the epoxycyclohexanol structure in trichoxide. This chain is Short chain dehydrogenase virL, found in Hypocrea virens (strain Gv29-8 / FGSC 10586) (Gliocladium virens).